The following is a 206-amino-acid chain: Large ribosomal subunit protein uL4 (206 aa).

A disordered region spans residues 46–89 (GNRAQKTRAEVKHSTKKPWRQKGTGRARSGMTSSPLWRKGGRAF). Over residues 59–70 (STKKPWRQKGTG) the composition is skewed to basic residues.

This sequence belongs to the universal ribosomal protein uL4 family. Part of the 50S ribosomal subunit.

In terms of biological role, one of the primary rRNA binding proteins, this protein initially binds near the 5'-end of the 23S rRNA. It is important during the early stages of 50S assembly. It makes multiple contacts with different domains of the 23S rRNA in the assembled 50S subunit and ribosome. Forms part of the polypeptide exit tunnel. This Neisseria gonorrhoeae (strain NCCP11945) protein is Large ribosomal subunit protein uL4.